The chain runs to 172 residues: uncharacterized protein (172 aa).

The first 29 residues, 1-29 (MKKKQVMLALTAAAGLGLTALHSAPAAKA), serve as a signal peptide directing secretion. 2 consecutive SH3b domains span residues 42–105 (SDTY…MKTA) and 112–172 (KQTA…LQMR).

This is an uncharacterized protein from Bacillus subtilis (strain 168).